We begin with the raw amino-acid sequence, 217 residues long: Thymidylate kinase (217 aa).

Residue 7-14 (GIDGAGKS) participates in ATP binding.

Belongs to the thymidylate kinase family.

The enzyme catalyses dTMP + ATP = dTDP + ADP. Its function is as follows. Phosphorylation of dTMP to form dTDP in both de novo and salvage pathways of dTTP synthesis. This Pelodictyon phaeoclathratiforme (strain DSM 5477 / BU-1) protein is Thymidylate kinase.